Reading from the N-terminus, the 111-residue chain is uncharacterized protein (111 aa).

2 consecutive transmembrane segments (helical) span residues 29–49 and 52–72; these read LLNFFIFFSLHLCALFLATAV and ACFACFVLFRHAILLLFYLLA.

The protein localises to the membrane. This is an uncharacterized protein from Saccharomyces cerevisiae (strain ATCC 204508 / S288c) (Baker's yeast).